Here is a 129-residue protein sequence, read N- to C-terminus: Small ribosomal subunit protein uS11 (129 aa).

It belongs to the universal ribosomal protein uS11 family. As to quaternary structure, part of the 30S ribosomal subunit. Interacts with proteins S7 and S18. Binds to IF-3.

Its function is as follows. Located on the platform of the 30S subunit, it bridges several disparate RNA helices of the 16S rRNA. Forms part of the Shine-Dalgarno cleft in the 70S ribosome. This Bradyrhizobium sp. (strain ORS 278) protein is Small ribosomal subunit protein uS11.